The chain runs to 221 residues: Probable endo-1,4-beta-xylanase B (221 aa).

Positions 1 to 19 (MVSFSSLALALSTVVGVLA) are cleaved as a signal peptide. The region spanning 33–221 (QLTHSQTGTK…SSGSATMTVS (189 aa)) is the GH11 domain. Glutamate 117 (nucleophile) is an active-site residue. Glutamate 208 (proton donor) is an active-site residue.

It belongs to the glycosyl hydrolase 11 (cellulase G) family.

The protein localises to the secreted. It carries out the reaction Endohydrolysis of (1-&gt;4)-beta-D-xylosidic linkages in xylans.. It functions in the pathway glycan degradation; xylan degradation. Functionally, endo-1,4-beta-xylanase involved in the hydrolysis of xylan, a major structural heterogeneous polysaccharide found in plant biomass representing the second most abundant polysaccharide in the biosphere, after cellulose. The protein is Probable endo-1,4-beta-xylanase B (xlnB) of Aspergillus clavatus (strain ATCC 1007 / CBS 513.65 / DSM 816 / NCTC 3887 / NRRL 1 / QM 1276 / 107).